A 790-amino-acid chain; its full sequence is PAN2-PAN3 deadenylation complex subunit PAN3 (790 aa).

Disordered stretches follow at residues 166–191 (IAQQQPQHPQKQQQHPPSVGGGAVSA) and 235–259 (AMISGAGPGEKSPPHGMTPHGASPI). Residues 168-191 (QQQPQHPQKQQQHPPSVGGGAVSA) show a composition bias toward low complexity. Residues 369-655 (DAAEAAQHAL…SVTDLMPMIG (287 aa)) form a pseudokinase domain region. Residues arginine 423, 472-479 (DYHPGSQT), and 552-553 (TK) contribute to the ATP site. The stretch at 656-694 (ARFYTQLDALQSKIDMQEDELAKEMENGRLYRILVKLNS) forms a coiled coil. The knob domain stretch occupies residues 695 to 790 (INERPDFNLD…FSELMSSAAN (96 aa)).

The protein belongs to the protein kinase superfamily. PAN3 family. As to quaternary structure, homodimer. Forms a heterotrimer with a catalytic subunit PAN2 to form the poly(A)-nuclease (PAN) deadenylation complex. Interacts (via PAM-2 motif) with poly(A)-binding protein (via PABC domain), conferring substrate specificity of the enzyme complex. Interacts with the GW182 family protein gw. Interacts with Gyf.

It is found in the cytoplasm. Its subcellular location is the P-body. Functionally, regulatory subunit of the poly(A)-nuclease (PAN) deadenylation complex, one of two cytoplasmic mRNA deadenylases involved in general and miRNA-mediated mRNA turnover. PAN specifically shortens poly(A) tails of RNA and the activity is stimulated by poly(A)-binding protein (PABP). PAN deadenylation is followed by rapid degradation of the shortened mRNA tails by the CCR4-NOT complex. Deadenylated mRNAs are then degraded by two alternative mechanisms, namely exosome-mediated 3'-5' exonucleolytic degradation, or deadenylation-dependent mRNA decaping and subsequent 5'-3' exonucleolytic degradation by XRN1. PAN3 acts as a positive regulator for PAN activity, recruiting the catalytic subunit PAN2 to mRNA via its interaction with RNA and PABP, and to miRNA targets via its interaction with GW182 family proteins. This Drosophila melanogaster (Fruit fly) protein is PAN2-PAN3 deadenylation complex subunit PAN3.